Here is a 56-residue protein sequence, read N- to C-terminus: uncharacterized protein (56 aa).

The next 2 membrane-spanning stretches (helical) occupy residues 5–23 (VLIF…YWIY) and 33–55 (ITAG…ILGW).

It localises to the cell membrane. This is an uncharacterized protein from Archaeoglobus fulgidus (strain ATCC 49558 / DSM 4304 / JCM 9628 / NBRC 100126 / VC-16).